Reading from the N-terminus, the 389-residue chain is STE20-related kinase adapter protein alpha (389 aa).

A Protein kinase domain is found at 11–321; sequence YELLTIIGRG…AGALLNHPFF (311 aa).

It belongs to the protein kinase superfamily. STE Ser/Thr protein kinase family. STE20 subfamily. Component of a trimeric complex composed of STK11/LKB1, STRAD (STRADA or STRADB) and CAB39/MO25 (CAB39/MO25alpha or CAB39L/MO25beta): the complex tethers STK11/LKB1 in the cytoplasm and stimulates its catalytic activity. In terms of tissue distribution, expressed in brain, hypothalamus, heart and skeletal muscle.

It localises to the nucleus. Its subcellular location is the cytoplasm. Pseudokinase which, in complex with CAB39/MO25 (CAB39/MO25alpha or CAB39L/MO25beta), binds to and activates STK11/LKB1. Adopts a closed conformation typical of active protein kinases and binds STK11/LKB1 as a pseudosubstrate, promoting conformational change of STK11/LKB1 in an active conformation. This chain is STE20-related kinase adapter protein alpha (STRADA), found in Gallus gallus (Chicken).